We begin with the raw amino-acid sequence, 1697 residues long: Neurexin-3a (1697 aa).

The signal sequence occupies residues Met-1–Gly-23. A Laminin G-like 1 domain is found at Leu-24–Cys-198. The Extracellular segment spans residues Leu-24–Thr-1622. The EGF-like 1 domain occupies Ile-194–Asn-231. 3 cysteine pairs are disulfide-bonded: Cys-198–Cys-209, Cys-203–Cys-218, and Cys-220–Cys-230. Laminin G-like domains lie at Val-258–Cys-455 and Asp-462–Cys-654. 3 residues coordinate Ca(2+): Asp-304, Leu-321, and Met-389. Intrachain disulfides connect Cys-419/Cys-455, Cys-625/Cys-654, Cys-662/Cys-673, Cys-667/Cys-682, and Cys-684/Cys-694. Positions Ser-658–Glu-695 constitute an EGF-like 2 domain. 2 Laminin G-like domains span residues Ile-700–Cys-872 and Asp-886–Cys-1061. Cystine bridges form between Cys-1033–Cys-1061, Cys-1077–Cys-1088, Cys-1082–Cys-1097, and Cys-1099–Cys-1109. An EGF-like 3 domain is found at Pro-1073 to Asn-1110. The Laminin G-like 6 domain occupies Thr-1114–Val-1314. Disordered stretches follow at residues Thr-1345–Met-1366, Leu-1442–Pro-1479, and Pro-1520–His-1557. The segment covering Gly-1446–Gly-1461 has biased composition (acidic residues). Polar residues predominate over residues Gly-1527 to Pro-1547. A helical membrane pass occupies residues Gly-1623–Met-1643. Over Tyr-1644–Val-1697 the chain is Cytoplasmic. A disordered region spans residues Asn-1665 to Val-1697.

It belongs to the neurexin family.

It is found in the membrane. Neuronal cell surface protein that may be involved in cell recognition and cell adhesion. This Danio rerio (Zebrafish) protein is Neurexin-3a (nrxn3a).